We begin with the raw amino-acid sequence, 78 residues long: Major outer membrane lipoprotein Lpp (78 aa).

A signal peptide spans 1–19 (MKAKIVLGAVILASGLLAG). The N-palmitoyl cysteine moiety is linked to residue C20. Residue C20 is the site of S-diacylglycerol cysteine attachment. Repeats lie at residues 25 to 35 (NAQLDQISSDV) and 39 to 49 (NTQVQQLSSDV). Residues 28–62 (LDQISSDVNRLNTQVQQLSSDVQSANAQAKAAYEA) are a coiled coil. K78 is modified (N6-murein peptidoglycan lysine).

The protein belongs to the Lpp family. As to quaternary structure, homotrimer.

It localises to the cell outer membrane. Its subcellular location is the secreted. The protein localises to the cell wall. In terms of biological role, a highly abundant outer membrane lipoprotein that controls the distance between the inner and outer membranes. The only protein known to be covalently linked to the peptidoglycan network (PGN). Also non-covalently binds the PGN. The link between the cell outer membrane and PGN contributes to maintenance of the structural and functional integrity of the cell envelope, and maintains the correct distance between the PGN and the outer membrane. The sequence is that of Major outer membrane lipoprotein Lpp from Proteus mirabilis.